Reading from the N-terminus, the 177-residue chain is Nucleoside triphosphate/diphosphate phosphatase (177 aa).

Arg23 functions as the Proton donor in the catalytic mechanism. Mg(2+) contacts are provided by Asn87, Asp103, Asp105, Asp107, Asp120, and Glu123.

It belongs to the Ntdp family. It depends on Mg(2+) as a cofactor.

It carries out the reaction a ribonucleoside 5'-triphosphate + H2O = a ribonucleoside 5'-diphosphate + phosphate + H(+). It catalyses the reaction a ribonucleoside 5'-diphosphate + H2O = a ribonucleoside 5'-phosphate + phosphate + H(+). In terms of biological role, has nucleoside phosphatase activity towards nucleoside triphosphates and nucleoside diphosphates. The chain is Nucleoside triphosphate/diphosphate phosphatase from Streptococcus thermophilus (strain CNRZ 1066).